A 443-amino-acid chain; its full sequence is Serine--tRNA ligase (443 aa).

Residue 250-252 coordinates L-serine; sequence TSE. 281-283 is an ATP binding site; it reads RSE. L-serine is bound at residue E304. 368-371 contributes to the ATP binding site; the sequence is EISS. S403 provides a ligand contact to L-serine.

Belongs to the class-II aminoacyl-tRNA synthetase family. Type-1 seryl-tRNA synthetase subfamily. In terms of assembly, homodimer. The tRNA molecule binds across the dimer.

It is found in the cytoplasm. It catalyses the reaction tRNA(Ser) + L-serine + ATP = L-seryl-tRNA(Ser) + AMP + diphosphate + H(+). The catalysed reaction is tRNA(Sec) + L-serine + ATP = L-seryl-tRNA(Sec) + AMP + diphosphate + H(+). It participates in aminoacyl-tRNA biosynthesis; selenocysteinyl-tRNA(Sec) biosynthesis; L-seryl-tRNA(Sec) from L-serine and tRNA(Sec): step 1/1. Functionally, catalyzes the attachment of serine to tRNA(Ser). Is also able to aminoacylate tRNA(Sec) with serine, to form the misacylated tRNA L-seryl-tRNA(Sec), which will be further converted into selenocysteinyl-tRNA(Sec). This is Serine--tRNA ligase from Variovorax paradoxus (strain S110).